The sequence spans 164 residues: Pleckstrin homology domain-containing family J member 1 (164 aa).

Residues 15–108 (PAEMAAELGM…WMEALQRASY (94 aa)) form the PH domain.

This Mus musculus (Mouse) protein is Pleckstrin homology domain-containing family J member 1 (Plekhj1).